The following is a 133-amino-acid chain: Profilin-3 (133 aa).

The protein belongs to the profilin family. In terms of assembly, occurs in many kinds of cells as a complex with monomeric actin in a 1:1 ratio.

Its subcellular location is the cytoplasm. The protein resides in the cytoskeleton. Its function is as follows. Binds to actin and affects the structure of the cytoskeleton. At high concentrations, profilin prevents the polymerization of actin, whereas it enhances it at low concentrations. By binding to PIP2, it inhibits the formation of IP3 and DG. This Nicotiana tabacum (Common tobacco) protein is Profilin-3 (PRO3).